The primary structure comprises 368 residues: Alanine racemase 3 (368 aa).

Residue K42 is the Proton acceptor; specific for D-alanine of the active site. K42 is modified (N6-(pyridoxal phosphate)lysine). R141 serves as a coordination point for substrate. The active-site Proton acceptor; specific for L-alanine is the Y262. M310 is a substrate binding site.

Belongs to the alanine racemase family. Pyridoxal 5'-phosphate serves as cofactor.

It catalyses the reaction L-alanine = D-alanine. The protein operates within amino-acid biosynthesis; D-alanine biosynthesis; D-alanine from L-alanine: step 1/1. Its function is as follows. Catalyzes the interconversion of L-alanine and D-alanine. May also act on other amino acids. This chain is Alanine racemase 3 (alr3), found in Salmonella typhi.